The sequence spans 508 residues: Photosystem II CP47 reaction center protein (508 aa).

Helical transmembrane passes span S21 to S36, I101 to W115, G140 to F156, I203 to S218, V237 to V252, and T457 to R472.

It belongs to the PsbB/PsbC family. PsbB subfamily. As to quaternary structure, PSII is composed of 1 copy each of membrane proteins PsbA, PsbB, PsbC, PsbD, PsbE, PsbF, PsbH, PsbI, PsbJ, PsbK, PsbL, PsbM, PsbT, PsbX, PsbY, PsbZ, Psb30/Ycf12, at least 3 peripheral proteins of the oxygen-evolving complex and a large number of cofactors. It forms dimeric complexes. It depends on Binds multiple chlorophylls. PSII binds additional chlorophylls, carotenoids and specific lipids. as a cofactor.

The protein resides in the plastid. It is found in the chloroplast thylakoid membrane. Functionally, one of the components of the core complex of photosystem II (PSII). It binds chlorophyll and helps catalyze the primary light-induced photochemical processes of PSII. PSII is a light-driven water:plastoquinone oxidoreductase, using light energy to abstract electrons from H(2)O, generating O(2) and a proton gradient subsequently used for ATP formation. In Pinus koraiensis (Korean pine), this protein is Photosystem II CP47 reaction center protein.